A 178-amino-acid polypeptide reads, in one-letter code: TM2 domain-containing protein biscotti (178 aa).

The signal sequence occupies residues 1-18; the sequence is MFPVLLLLLFFFAKETHQ. Topologically, residues 19–99 are extracellular; it reads INVDCNELQM…YHLDTTLLLS (81 aa). N-linked (GlcNAc...) asparagine glycosylation is found at asparagine 69 and asparagine 75. One can recognise a TM2 domain in the interval 94-137; that stretch reads TTLLLSVFLGMFGVDRFYLGYPGIGLLKFCTLGGMFLGQLIDIV. A helical membrane pass occupies residues 100–120; the sequence is VFLGMFGVDRFYLGYPGIGLL. Residues 121 to 124 lie on the Cytoplasmic side of the membrane; that stretch reads KFCT. The helical transmembrane segment at 125 to 145 threads the bilayer; that stretch reads LGGMFLGQLIDIVLIALQVVG. Topologically, residues 146–178 are extracellular; it reads PADGSAYVIPYYGAGIHIVRSDNTTYRLPRDDW. N-linked (GlcNAc...) asparagine glycosylation is present at asparagine 168.

Belongs to the TM2 family.

Its subcellular location is the membrane. In terms of biological role, positive regulator of Notch signaling. Maternal neurogenic factor involved in Notch signaling-dependent neuroectodermal specification during early embryogenesis. Functions cooperatively with amx/TM2D3 and amrt/TM2D2. In Drosophila melanogaster (Fruit fly), this protein is TM2 domain-containing protein biscotti.